The chain runs to 551 residues: MDRRRFIKGSMAMAAVCGTSGIASLFSQAAFAADSDIADGQTQRFDFSILQSMAHDLAQTAWHGAPRPLPDTLATMTPQAYNSIQYDAEKSLWHNVENRQLDAQFFHMGMGFRRRVRMFSVDPATHLAREIHFRPELFKYNDAGVDTKQLEGQSDLGFAGFRVFKAPELARRDVVSFLGASYFRAVDDTYQYGLSARGLAIDTYTDSKEEFPDFTAFWFDTVKPGATTFTVYALLDSASITGAYKFTIHCEKSQVIMDVENHLYARKDIKQLGIAPMTSMFSCGTNERRMCDTIHPQIHDSDRLSMWRGNGEWICRPLNNPQKLQFNAYTDNNPKGFGLLQLDRDFSHYQDIMGWYNKRPSLWVEPRNKWGKGTIGLMEIPTTGETLDNIVCFWQPEKAVKAGDEFAFQYRLYWSAQPPVHCPLARVMATRTGMGGFPEGWAPGEHYPEKWARRFAVDFVGGDLKAAAPKGIEPVITLSSGEAKQIEILYIEPIDGYRIQFDWYPTSDSTDPVDMRMYLRCQGDAISETWLYQYFPPAPDKRQYVDDRVMS.

The segment at residues 1-32 (MDRRRFIKGSMAMAAVCGTSGIASLFSQAAFA) is a signal peptide (tat-type signal).

The protein belongs to the OpgD/OpgG family. Predicted to be exported by the Tat system. The position of the signal peptide cleavage has not been experimentally proven.

It localises to the periplasm. It functions in the pathway glycan metabolism; osmoregulated periplasmic glucan (OPG) biosynthesis. Probably involved in the control of the structural glucose backbone of osmoregulated periplasmic glucans (OPGs). The sequence is that of Glucans biosynthesis protein D from Escherichia coli O9:H4 (strain HS).